Reading from the N-terminus, the 847-residue chain is Matrin-3 (847 aa).

Serine 2 is modified (N-acetylserine). Position 3 is an N6-acetyllysine; alternate (lysine 3). Lysine 3 participates in a covalent cross-link: Glycyl lysine isopeptide (Lys-Gly) (interchain with G-Cter in SUMO2); alternate. Serine 4, serine 9, serine 11, serine 14, serine 22, serine 41, serine 118, and serine 126 each carry phosphoserine. Residues lysine 132 and lysine 146 each participate in a glycyl lysine isopeptide (Lys-Gly) (interchain with G-Cter in SUMO2) cross-link. Disordered stretches follow at residues 146–174 (KRRRTEEGPTLSYGRDGRSATREPPYRVP) and 187–214 (DSFDDRGPSLNPVLDYDHGSRSQESGYY). Threonine 150 is subject to Phosphothreonine. At serine 157 the chain carries Phosphoserine. Phosphotyrosine is present on tyrosine 158. The segment covering 160–174 (RDGRSATREPPYRVP) has biased composition (basic and acidic residues). Residues serine 164, serine 188, and serine 195 each carry the phosphoserine modification. Residues 201–214 (DYDHGSRSQESGYY) show a composition bias toward basic and acidic residues. Tyrosine 202 carries the post-translational modification Phosphotyrosine. Phosphoserine is present on residues serine 206, serine 208, and serine 211. Tyrosine 219 bears the Phosphotyrosine mark. Serine 234 carries the phosphoserine modification. Lysine 245 participates in a covalent cross-link: Glycyl lysine isopeptide (Lys-Gly) (interchain with G-Cter in SUMO2). A Phosphoserine modification is found at serine 264. A Glycyl lysine isopeptide (Lys-Gly) (interchain with G-Cter in SUMO2) cross-link involves residue lysine 269. Residue serine 275 is modified to Phosphoserine. A disordered region spans residues 342-394 (PFMLQQSTNPAPGILGPPPPSFHLGGPAVGPRGNLGAGNGNLQGPRHMQKGRV). An RRM 1 domain is found at 398–473 (RVVHIMDFQR…KPVRVHLSQK (76 aa)). Residues lysine 478, lysine 487, and lysine 491 each participate in a glycyl lysine isopeptide (Lys-Gly) (interchain with G-Cter in SUMO2) cross-link. Residues 496 to 571 (RVIHLSNLPH…RCVKVDLSEK (76 aa)) form the RRM 2 domain. Phosphoserine is present on residues serine 509 and serine 511. Lysine 515 is covalently cross-linked (Glycyl lysine isopeptide (Lys-Gly) (interchain with G-Cter in SUMO2)). Lysine 522 is modified (N6-acetyllysine; alternate). Lysine 522 is covalently cross-linked (Glycyl lysine isopeptide (Lys-Gly) (interchain with G-Cter in SUMO2); alternate). Serine 533 is modified (phosphoserine). Residues lysine 554 and lysine 555 each participate in a glycyl lysine isopeptide (Lys-Gly) (interchain with G-Cter in SUMO2) cross-link. Lysine 571 carries the N6-acetyllysine modification. Residues 588–786 (KKDKSRKRSY…DEYRIGPYQP (199 aa)) form a disordered region. Serine 596, serine 598, serine 604, and serine 606 each carry phosphoserine. Over residues 600 to 643 (DGKESPSDKKSKTDGSQKTESSTEGKEQEEKSGEDGEKDTKDDQ) the composition is skewed to basic and acidic residues. Glycyl lysine isopeptide (Lys-Gly) (interchain with G-Cter in SUMO2) cross-links involve residues lysine 617 and lysine 630. The span at 653–665 (ESEDELLVDEEEA) shows a compositional bias: acidic residues. Phosphoserine occurs at positions 654, 671, 673, and 674. The segment covering 666–676 (AALLESGSSVG) has biased composition (low complexity). Threonine 679 carries the phosphothreonine modification. Phosphoserine is present on serine 689. Basic and acidic residues predominate over residues 689–704 (SDGKKEPSDKAVKKDG). A Nuclear localization signal motif is present at residues 710-718 (AKKKLKKVD). Glycyl lysine isopeptide (Lys-Gly) (interchain with G-Cter in SUMO2) cross-links involve residues lysine 719 and lysine 736. Residue threonine 741 is modified to Phosphothreonine. A phosphoserine mark is found at serine 747, serine 759, and serine 766. A compositionally biased stretch (basic and acidic residues) spans 767–780 (DENKDDYTIPDEYR). Lysine 770 participates in a covalent cross-link: Glycyl lysine isopeptide (Lys-Gly) (interchain with G-Cter in SUMO2). Residues 801 to 832 (FYCKLCSLFYTNEEVAKNTHCSSLPHYQKLKK) form a Matrin-type zinc finger. Position 836 is an N6-acetyllysine; alternate (lysine 836). A Glycyl lysine isopeptide (Lys-Gly) (interchain with G-Cter in SUMO2); alternate cross-link involves residue lysine 836.

Part of a complex consisting of SFPQ, NONO and MATR3. Interacts with AGO1 and AGO2. Part of a complex composed at least of ASH2L, EMSY, HCFC1, HSPA8, CCAR2, MATR3, MKI67, RBBP5, TUBB2A, WDR5 and ZNF335; this complex may have a histone H3-specific methyltransferase activity. Interacts with TARDBP. Part of the HDP-RNP complex composed of at least HEXIM1, PRKDC, XRCC5, XRCC6, paraspeckle proteins (SFPQ, NONO, PSPC1, RBM14, and MATR3) and NEAT1 RNA. Interacts with FUS. Interacts with IGF2BP1; the interaction is enhanced by SEPIN14P20 peptide RBPR. Interacts with IGF2BP2 and IGF2BP3. Interacts with RBPMS.

The protein localises to the nucleus matrix. Its function is as follows. May play a role in transcription or may interact with other nuclear matrix proteins to form the internal fibrogranular network. In association with the SFPQ-NONO heteromer may play a role in nuclear retention of defective RNAs. Plays a role in the regulation of DNA virus-mediated innate immune response by assembling into the HDP-RNP complex, a complex that serves as a platform for IRF3 phosphorylation and subsequent innate immune response activation through the cGAS-STING pathway. Binds to N6-methyladenosine (m6A)-containing mRNAs and contributes to MYC stability by binding to m6A-containing MYC mRNAs. May bind to specific miRNA hairpins. This chain is Matrin-3 (MATR3), found in Homo sapiens (Human).